A 117-amino-acid chain; its full sequence is 16 kDa protein (117 aa).

The polypeptide is 16 kDa protein (Tobacco rattle virus (strain PLB)).